The following is a 204-amino-acid chain: E3 ubiquitin-protein ligase MPSR1 (204 aa).

The RING-type; atypical zinc finger occupies C113–R154.

Autoubiquitinated.

The protein localises to the cytoplasm. It carries out the reaction S-ubiquitinyl-[E2 ubiquitin-conjugating enzyme]-L-cysteine + [acceptor protein]-L-lysine = [E2 ubiquitin-conjugating enzyme]-L-cysteine + N(6)-ubiquitinyl-[acceptor protein]-L-lysine.. Functionally, E3 ubiquitin-protein ligase involved in protein quality control (PQC) under proteotoxic stress. Is essential to plant survival under proteotoxic stress. Functions by removing damaged proteins before they form cytotoxic aggregates. Recognizes misfolded proteins selectively and tethers polyubiquitin chains to the proteins directly for subsequent degradation by the 26S proteasome pathway. Targets misfolded proteins independently of cytoplasmic chaperones. Associates with the 26S proteasome and sustains the structural integrity of the proteasome complex at the initial stage of proteotoxic stress. Under normal conditions, MPSR1 becomes highly unstable by its autoubiquitination activity and is stabilized during proteotoxic stress by conjugating ubiquitins on misfolded proteins. This chain is E3 ubiquitin-protein ligase MPSR1, found in Arabidopsis thaliana (Mouse-ear cress).